A 267-amino-acid chain; its full sequence is Undecaprenyl-diphosphatase (267 aa).

The next 8 helical transmembrane spans lie at 5–25, 45–65, 82–102, 108–128, 143–163, 183–203, 213–233, and 243–263; these read TIVA…PVSS, FEVL…AGRL, ILAV…AHRI, FETP…LLFV, FPLP…IPGV, AAEF…VYDL, AATG…VVVV, and YGYG…LLAL.

The protein belongs to the UppP family.

The protein resides in the cell inner membrane. It carries out the reaction di-trans,octa-cis-undecaprenyl diphosphate + H2O = di-trans,octa-cis-undecaprenyl phosphate + phosphate + H(+). Functionally, catalyzes the dephosphorylation of undecaprenyl diphosphate (UPP). Confers resistance to bacitracin. This is Undecaprenyl-diphosphatase from Paracoccus denitrificans (strain Pd 1222).